We begin with the raw amino-acid sequence, 396 residues long: Acyl-[acyl-carrier-protein] desaturase, chloroplastic (396 aa).

The N-terminal 33 residues, 1-33 (MALKFHPLTSQSPKLPSFRMPQLASLRSPKFVM), are a transit peptide targeting the chloroplast. Residues Glu-138, Glu-176, His-179, Glu-229, Glu-262, and His-265 each coordinate Fe cation.

The protein belongs to the fatty acid desaturase type 2 family. Homodimer. It depends on Fe(2+) as a cofactor.

The protein localises to the plastid. It localises to the chloroplast. It participates in lipid metabolism; fatty acid metabolism. Introduces a cis double bond in the acyl chain of an acyl-[acyl-carrier protein]. This chain is Acyl-[acyl-carrier-protein] desaturase, chloroplastic, found in Cucumis sativus (Cucumber).